A 264-amino-acid chain; its full sequence is MKQYLELMQKVLDEGTQKNDRTGTGTLSIFGHQMRFNLQEGFPLVTTKRCHLRSIIHELLWFLQGNTNIAYLHENNVTIWDEWADENGDLGPVYGKQWRAWPTPDGRHIDQITTVLNQLKNDPDSRRIIVSAWNVGELDKMALAPCHAFFQFYVADGKLSCQLYQRSCDVFLGLPFNIASYALLVHMMAQQCDLEVGDFVWTGGDTHLYSNHMDQTHLQLSREPRPLPKLIIKRKPESIFDYRFEDFEIEGYDPHPGIKAPVAI.

Arg-21 contributes to the dUMP binding site. Position 51 (His-51) interacts with (6R)-5,10-methylene-5,6,7,8-tetrahydrofolate. 126–127 contributes to the dUMP binding site; the sequence is RR. The Nucleophile role is filled by Cys-146. DUMP is bound by residues 166-169, Asn-177, and 207-209; these read RSCD and HLY. Asp-169 provides a ligand contact to (6R)-5,10-methylene-5,6,7,8-tetrahydrofolate. (6R)-5,10-methylene-5,6,7,8-tetrahydrofolate is bound at residue Ala-263.

It belongs to the thymidylate synthase family. Bacterial-type ThyA subfamily. Homodimer.

It is found in the cytoplasm. The catalysed reaction is dUMP + (6R)-5,10-methylene-5,6,7,8-tetrahydrofolate = 7,8-dihydrofolate + dTMP. It functions in the pathway pyrimidine metabolism; dTTP biosynthesis. In terms of biological role, catalyzes the reductive methylation of 2'-deoxyuridine-5'-monophosphate (dUMP) to 2'-deoxythymidine-5'-monophosphate (dTMP) while utilizing 5,10-methylenetetrahydrofolate (mTHF) as the methyl donor and reductant in the reaction, yielding dihydrofolate (DHF) as a by-product. This enzymatic reaction provides an intracellular de novo source of dTMP, an essential precursor for DNA biosynthesis. The polypeptide is Thymidylate synthase (Shigella dysenteriae serotype 1 (strain Sd197)).